The chain runs to 264 residues: uncharacterized protein (264 aa).

A helical transmembrane segment spans residues 7–27; sequence LTLGICLVLLIILIVGYVIMT.

Belongs to the staphylococcal tandem lipoprotein family.

The protein resides in the cell membrane. This is an uncharacterized protein from Staphylococcus aureus (strain MRSA252).